Reading from the N-terminus, the 129-residue chain is Large ribosomal subunit protein bL20 (129 aa).

Belongs to the bacterial ribosomal protein bL20 family.

Functionally, binds directly to 23S ribosomal RNA and is necessary for the in vitro assembly process of the 50S ribosomal subunit. It is not involved in the protein synthesizing functions of that subunit. The sequence is that of Large ribosomal subunit protein bL20 from Mycobacterium marinum (strain ATCC BAA-535 / M).